The following is a 248-amino-acid chain: Malonyl-[acyl-carrier protein] O-methyltransferase 2 (248 aa).

Belongs to the methyltransferase superfamily.

It catalyses the reaction malonyl-[ACP] + S-adenosyl-L-methionine = malonyl-[ACP] methyl ester + S-adenosyl-L-homocysteine. It participates in cofactor biosynthesis; biotin biosynthesis. Its function is as follows. Converts the free carboxyl group of a malonyl-thioester to its methyl ester by transfer of a methyl group from S-adenosyl-L-methionine (SAM). It allows to synthesize pimeloyl-ACP via the fatty acid synthetic pathway. The protein is Malonyl-[acyl-carrier protein] O-methyltransferase 2 of Coxiella burnetii (strain RSA 493 / Nine Mile phase I).